A 222-amino-acid chain; its full sequence is Adenylate kinase (222 aa).

Residue S2 is a propeptide, removed in mature form. N-acetylserine occurs at positions 2 and 3. Residue 16–21 coordinates ATP; it reads GAGKGT. Positions 36–65 are NMP; the sequence is ATGDMLRSQIAKGTQLGLEAKKIMDQGGLV. Residues T37, R42, 63 to 65, 92 to 95, and Q99 contribute to the AMP site; these read GLV and GFPR. An LID region spans residues 133 to 170; it reads GRLIHPASGRSYHKIFNPPKEDMKDDVTGEALVQRSDD. ATP contacts are provided by residues R134 and 143-144; that span reads SY. The AMP site is built by R167 and R178. Position 206 (Q206) interacts with ATP.

Belongs to the adenylate kinase family. AK2 subfamily. In terms of assembly, monomer.

It is found in the cytoplasm. Its subcellular location is the cytosol. It localises to the mitochondrion intermembrane space. It carries out the reaction AMP + ATP = 2 ADP. Its function is as follows. Catalyzes the reversible transfer of the terminal phosphate group between ATP and AMP. Plays an important role in cellular energy homeostasis and in adenine nucleotide metabolism. Adenylate kinase activity is critical for regulation of the phosphate utilization and the AMP de novo biosynthesis pathways. The sequence is that of Adenylate kinase from Saccharomyces cerevisiae (strain YJM789) (Baker's yeast).